The sequence spans 1770 residues: Vitellogenin (1770 aa).

Positions 1-16 (MLLLLTLLLFAGTVAA) are cleaved as a signal peptide. Positions 22–809 (WQVGNEYTYL…SEDSVIPRIL (788 aa)) constitute a Vitellogenin domain. Cysteine 178 and cysteine 222 are joined by a disulfide. An N-linked (GlcNAc...) asparagine glycan is attached at asparagine 296. Residues 373–394 (SSSSSISSSEENDFWQPKPTLE) form a disordered region. A glycan (N-linked (GlcNAc...) asparagine) is linked at asparagine 1067. Residues 1442-1635 (TSCMLDKTRA…SYALISNQCE (194 aa)) form the VWFD domain. Cystine bridges form between cysteine 1444–cysteine 1598 and cysteine 1466–cysteine 1634.

In terms of tissue distribution, accumulates in the hemolymph. Represents up to 70% of the queen's hemolymph proteins. During the first week of the worker adult life, when it becomes a nurse bee and performs brood-rearing tasks, the vitellogenin titer increases and may account for up to 40% of the total hemolymph proteins.

It is found in the secreted. Functionally, precursor of the egg-yolk proteins that are sources of nutrients during embryonic development. Involved in the differentiation of honeybee larvae into queens. The polypeptide is Vitellogenin (Vg) (Apis mellifera (Honeybee)).